Reading from the N-terminus, the 417-residue chain is Cytochrome b-c1 complex subunit 2, mitochondrial (417 aa).

A mitochondrion-targeting transit peptide spans 1-22 (MTRGVPRLAVAARHFSTAEAAG).

This sequence belongs to the peptidase M16 family. UQCRC2/QCR2 subfamily. In terms of assembly, component of the ubiquinol-cytochrome c oxidoreductase (cytochrome b-c1 complex, complex III, CIII), a multisubunit enzyme composed of 3 respiratory subunits cytochrome b, cytochrome c1 and Rieske protein, 2 core protein subunits, and additional low-molecular weight protein subunits. The complex exists as an obligatory dimer and forms supercomplexes (SCs) in the inner mitochondrial membrane with cytochrome c oxidase (complex IV, CIV).

It localises to the mitochondrion inner membrane. Component of the ubiquinol-cytochrome c oxidoreductase, a multisubunit transmembrane complex that is part of the mitochondrial electron transport chain which drives oxidative phosphorylation. The respiratory chain contains 3 multisubunit complexes succinate dehydrogenase (complex II, CII), ubiquinol-cytochrome c oxidoreductase (cytochrome b-c1 complex, complex III, CIII) and cytochrome c oxidase (complex IV, CIV), that cooperate to transfer electrons derived from NADH and succinate to molecular oxygen, creating an electrochemical gradient over the inner membrane that drives transmembrane transport and the ATP synthase. The cytochrome b-c1 complex catalyzes electron transfer from ubiquinol to cytochrome c, linking this redox reaction to translocation of protons across the mitochondrial inner membrane, with protons being carried across the membrane as hydrogens on the quinol. In the process called Q cycle, 2 protons are consumed from the matrix, 4 protons are released into the intermembrane space and 2 electrons are passed to cytochrome c. The chain is Cytochrome b-c1 complex subunit 2, mitochondrial (QCR2) from Yarrowia lipolytica (strain CLIB 122 / E 150) (Yeast).